We begin with the raw amino-acid sequence, 152 residues long: Xanthine-guanine phosphoribosyltransferase (152 aa).

5-phospho-alpha-D-ribose 1-diphosphate-binding positions include 37 to 38 (RG), arginine 69, and 88 to 96 (DDLVDTGGT). Arginine 69 provides a ligand contact to GMP. Aspartate 89 is a Mg(2+) binding site. Positions 92 and 135 each coordinate guanine. 2 residues coordinate xanthine: aspartate 92 and isoleucine 135. GMP is bound by residues 92-96 (DTGGT) and 134-135 (WI).

The protein belongs to the purine/pyrimidine phosphoribosyltransferase family. XGPT subfamily. In terms of assembly, homotetramer. Mg(2+) is required as a cofactor.

Its subcellular location is the cell inner membrane. It carries out the reaction GMP + diphosphate = guanine + 5-phospho-alpha-D-ribose 1-diphosphate. The enzyme catalyses XMP + diphosphate = xanthine + 5-phospho-alpha-D-ribose 1-diphosphate. It catalyses the reaction IMP + diphosphate = hypoxanthine + 5-phospho-alpha-D-ribose 1-diphosphate. Its pathway is purine metabolism; GMP biosynthesis via salvage pathway; GMP from guanine: step 1/1. It participates in purine metabolism; XMP biosynthesis via salvage pathway; XMP from xanthine: step 1/1. Purine salvage pathway enzyme that catalyzes the transfer of the ribosyl-5-phosphate group from 5-phospho-alpha-D-ribose 1-diphosphate (PRPP) to the N9 position of the 6-oxopurines guanine and xanthine to form the corresponding ribonucleotides GMP (guanosine 5'-monophosphate) and XMP (xanthosine 5'-monophosphate), with the release of PPi. To a lesser extent, also acts on hypoxanthine. The chain is Xanthine-guanine phosphoribosyltransferase from Salmonella choleraesuis (strain SC-B67).